Reading from the N-terminus, the 218-residue chain is MRLILLGAPGAGKGTQAAFICQKFGIPQISTGDMLRAAVKAGTPLGLQAKAVMDAGQLVSDDLIINLVKERIAEPDCAQGFLFDGFPRTIPQADAMKAAGVKLDYVLEIDVPFDAIIERMSGRRSHPASGRTYHVKFNPPKVEGKDDVTGEPLVQREDDKEETVKKRLQVYSDQTRPLVDYYSSWAKTDPANAPKYRAIQGTGSVEEITQRALTALSS.

10–15 (GAGKGT) lines the ATP pocket. The tract at residues 30-59 (STGDMLRAAVKAGTPLGLQAKAVMDAGQLV) is NMP. AMP contacts are provided by residues T31, R36, 57–59 (QLV), 85–88 (GFPR), and Q92. The segment at 122-159 (GRRSHPASGRTYHVKFNPPKVEGKDDVTGEPLVQREDD) is LID. Residues R123 and 132–133 (TY) contribute to the ATP site. The interval 127–150 (PASGRTYHVKFNPPKVEGKDDVTG) is disordered. Residues R156 and R167 each contribute to the AMP site. An ATP-binding site is contributed by G203.

It belongs to the adenylate kinase family. In terms of assembly, monomer.

It localises to the cytoplasm. It catalyses the reaction AMP + ATP = 2 ADP. It participates in purine metabolism; AMP biosynthesis via salvage pathway; AMP from ADP: step 1/1. Functionally, catalyzes the reversible transfer of the terminal phosphate group between ATP and AMP. Plays an important role in cellular energy homeostasis and in adenine nucleotide metabolism. The chain is Adenylate kinase from Acidovorax ebreus (strain TPSY) (Diaphorobacter sp. (strain TPSY)).